We begin with the raw amino-acid sequence, 691 residues long: Tumor necrosis factor alpha-induced protein 2 (691 aa).

The segment at 9-111 (QGFPGQQSVP…KPRPELDGPL (103 aa)) is disordered. Polar residues predominate over residues 12-31 (PGQQSVPGTLNFAVSPQKPR). Residues 33–45 (TSEAESETSMSEA) show a composition bias toward low complexity. Residues 91-107 (QPRLSDLEVQPKPRPEL) are compositionally biased toward basic and acidic residues.

It belongs to the SEC6 family.

Its function is as follows. May play a role as a mediator of inflammation and angiogenesis. This Mus musculus (Mouse) protein is Tumor necrosis factor alpha-induced protein 2 (Tnfaip2).